A 180-amino-acid polypeptide reads, in one-letter code: Large ribosomal subunit protein uL5 (180 aa).

The protein belongs to the universal ribosomal protein uL5 family. As to quaternary structure, part of the 50S ribosomal subunit; part of the 5S rRNA/L5/L18/L25 subcomplex. Contacts the 5S rRNA and the P site tRNA. Forms a bridge to the 30S subunit in the 70S ribosome.

In terms of biological role, this is one of the proteins that bind and probably mediate the attachment of the 5S RNA into the large ribosomal subunit, where it forms part of the central protuberance. In the 70S ribosome it contacts protein S13 of the 30S subunit (bridge B1b), connecting the 2 subunits; this bridge is implicated in subunit movement. Contacts the P site tRNA; the 5S rRNA and some of its associated proteins might help stabilize positioning of ribosome-bound tRNAs. The sequence is that of Large ribosomal subunit protein uL5 from Rippkaea orientalis (strain PCC 8801 / RF-1) (Cyanothece sp. (strain PCC 8801)).